The primary structure comprises 302 residues: D-alanine--D-alanine ligase B (302 aa).

The ATP-grasp domain occupies 99–294 (KKVLKAENIR…YSKFIDLIIE (196 aa)). 126-181 (IEEIGYPVFVKPNNGGSSVATFKVYKKEDIKNSVMEGLKYDEEVIIESFIKGREIT) lines the ATP pocket. Asp-248, Glu-261, and Asn-263 together coordinate Mg(2+).

The protein belongs to the D-alanine--D-alanine ligase family. Mg(2+) serves as cofactor. The cofactor is Mn(2+).

Its subcellular location is the cytoplasm. The enzyme catalyses 2 D-alanine + ATP = D-alanyl-D-alanine + ADP + phosphate + H(+). Its pathway is cell wall biogenesis; peptidoglycan biosynthesis. In terms of biological role, cell wall formation. This Clostridium perfringens (strain 13 / Type A) protein is D-alanine--D-alanine ligase B.